A 416-amino-acid polypeptide reads, in one-letter code: Iron-regulated transcriptional activator AFT2 (416 aa).

Aspartate 53 contacts Zn(2+). DNA contacts are provided by arginine 54, histidine 55, lysine 58, isoleucine 74, glutamate 75, arginine 76, serine 77, aspartate 78, and lysine 81. Histidine 55 contacts Zn(2+). Position 86 (cysteine 86) interacts with Zn(2+). Serine 88 contacts DNA. Cysteine 109 is a Zn(2+) binding site. Valine 119 and arginine 120 together coordinate DNA. Zn(2+)-binding residues include histidine 133 and histidine 135. Residues glutamine 157 and asparagine 159 each contribute to the DNA site. The CDC [2Fe-2S] cluster binding motif motif lies at 187–189 (CDC).

Homodimer. Dimerization decreases the DNA-binding activity.

The protein localises to the nucleus. With respect to regulation, dimerization via the binding of Fe(2+) or a [2Fe-2S] cluster decreases the DNA-binding activity. Its function is as follows. Transcription factor required for iron homeostasis and resistance to oxidative stress. With AFT1, activates the gene expression in response to low-iron conditions, also called iron regulon. Recognizes the consensus iron-responsive element (Fe-RE) sequence 5'-CACCC-3' in the promoters of target genes. The transcription activation by AFT1 and AFT2 depends on the mitochondrial iron-sulfur protein biosynthesis pathway. In high iron condition, the presence of iron leads to dimerization, which in turn leads to a decrease in DNA affinity. The protein is Iron-regulated transcriptional activator AFT2 of Saccharomyces cerevisiae (strain ATCC 204508 / S288c) (Baker's yeast).